The sequence spans 88 residues: Defensin-like protein 24 (88 aa).

Residues 1–23 (MASSKFVLFAILALSLLLSGTEA) form the signal peptide. Cystine bridges form between Cys-37–Cys-87, Cys-47–Cys-72, Cys-56–Cys-83, and Cys-60–Cys-85.

It belongs to the DEFL family.

It localises to the secreted. In Arabidopsis thaliana (Mouse-ear cress), this protein is Defensin-like protein 24.